The sequence spans 426 residues: Glutamyl-tRNA reductase (426 aa).

Substrate is bound by residues 49-52, Ser109, 114-116, and Gln120; these read TCNR and EGQ. The Nucleophile role is filled by Cys50. 189-194 is an NADP(+) binding site; that stretch reads GAGETG.

Belongs to the glutamyl-tRNA reductase family. As to quaternary structure, homodimer.

The enzyme catalyses (S)-4-amino-5-oxopentanoate + tRNA(Glu) + NADP(+) = L-glutamyl-tRNA(Glu) + NADPH + H(+). It functions in the pathway porphyrin-containing compound metabolism; protoporphyrin-IX biosynthesis; 5-aminolevulinate from L-glutamyl-tRNA(Glu): step 1/2. The protein operates within porphyrin-containing compound metabolism; chlorophyll biosynthesis. In terms of biological role, catalyzes the NADPH-dependent reduction of glutamyl-tRNA(Glu) to glutamate 1-semialdehyde (GSA). The protein is Glutamyl-tRNA reductase of Chlorobium chlorochromatii (strain CaD3).